A 106-amino-acid polypeptide reads, in one-letter code: ATP-dependent Clp protease adapter protein ClpS (106 aa).

Residues 1-20 (MKVDMSTSVKDDAQLEASRV) are disordered.

This sequence belongs to the ClpS family. As to quaternary structure, binds to the N-terminal domain of the chaperone ClpA.

Involved in the modulation of the specificity of the ClpAP-mediated ATP-dependent protein degradation. The polypeptide is ATP-dependent Clp protease adapter protein ClpS (Chromobacterium violaceum (strain ATCC 12472 / DSM 30191 / JCM 1249 / CCUG 213 / NBRC 12614 / NCIMB 9131 / NCTC 9757 / MK)).